The chain runs to 480 residues: MILKLYNTRTRDFSELTNFENVKVYACGPTVYNYAHIGNFRTYVFGDLLIKTLRFLGYKVNYAMNITDIGHLTGDLDDGEDKVAKTAREKGLTVYEISEFFTEAFFNDCRKLNIVYPDKVLVASKHIPIMIEVVKILEEKKITYFSNGNVYFDTSCFKSYGEMAGIDLIDKDMTLPRVDVDKFKRNKTDFVLWFTNSKFKDQEMKWDSPWGFGYPSWHLECAAMNLEYFKDTLDIHLGGVDHIGVHHINEIAIAECFLDNKWCDVFVHGEFLIMDYNKMSKSRGNFITVKDLEDQNFSPLDFRYLCLTSHYRNQLKFSLDNLQASKIARENLINKLSYFYESLDPVDLNTLNKDLKNFGFSVEKEYYDSFVEKISFDLNVAQGLALLWEIIKSENLSFVSKLRLAFIFDEIMSLNLREEILKNLQNHDVVIDENMKALIEERRIAKCEKNFKRADEIRDFFAKKGFVLVDTKEGTKVKRG.

C27 provides a ligand contact to Zn(2+). The short motif at 29–39 (PTVYNYAHIGN) is the 'HIGH' region element. Residues C221, H246, and E250 each contribute to the Zn(2+) site. Positions 278 to 282 (KMSKS) match the 'KMSKS' region motif. K281 lines the ATP pocket.

The protein belongs to the class-I aminoacyl-tRNA synthetase family. Monomer. The cofactor is Zn(2+).

The protein resides in the cytoplasm. It catalyses the reaction tRNA(Cys) + L-cysteine + ATP = L-cysteinyl-tRNA(Cys) + AMP + diphosphate. This chain is Cysteine--tRNA ligase, found in Borreliella burgdorferi (strain ZS7) (Borrelia burgdorferi).